We begin with the raw amino-acid sequence, 356 residues long: Dihydroorotate dehydrogenase (quinone) (356 aa).

FMN is bound by residues 60-64 (AGFDK) and Ser-84. Residue Lys-64 coordinates substrate. Substrate is bound at residue 109-113 (NRFGF). Asn-140 and Asn-171 together coordinate FMN. Asn-171 lines the substrate pocket. Ser-174 acts as the Nucleophile in catalysis. Asn-176 serves as a coordination point for substrate. FMN is bound by residues Lys-216 and Gly-244. 245 to 246 (NT) lines the substrate pocket. FMN is bound by residues Gly-267, Gly-296, and 317 to 318 (YS).

It belongs to the dihydroorotate dehydrogenase family. Type 2 subfamily. As to quaternary structure, monomer. FMN is required as a cofactor.

It localises to the cell membrane. It catalyses the reaction (S)-dihydroorotate + a quinone = orotate + a quinol. Its pathway is pyrimidine metabolism; UMP biosynthesis via de novo pathway; orotate from (S)-dihydroorotate (quinone route): step 1/1. Its function is as follows. Catalyzes the conversion of dihydroorotate to orotate with quinone as electron acceptor. This Azorhizobium caulinodans (strain ATCC 43989 / DSM 5975 / JCM 20966 / LMG 6465 / NBRC 14845 / NCIMB 13405 / ORS 571) protein is Dihydroorotate dehydrogenase (quinone).